We begin with the raw amino-acid sequence, 414 residues long: MKTYLVGGAVRDSLLNLPVTEQDWVVVGATPEQLLAQGYQQVGKDFPVFLHPVTHEEYALARTERKSGQGYTGFTCYAAPDVTLEEDLLRRDLTINAIARSSEGELFDPYNGQQDIEKRVLRHVSDAFGEDPLRVLRVARFAARFAHLGFTVASETQSLMAAMAKSGELSALTPERVWKETEKALKTQSPQIYFQVLRDCGALAVLFPEIECLFGVPAPEKWHPEIDTGIHTLMTLAMTAQLSPEVDVRFAALCHDLGKGLTPKEFWPHHHGHGPAGVKLVEQLCQRLRVPNPVRDLAKLVAEYHDLIHTVNKLRPETLLKLFDAIDVWRKPERLEQMIMTSEADARGRTGFEENPYPQGDYLRAAFRIANGVSVQEVVASGLQGLAIRDELKRRRQQALAEWKLTQEVISPLN.

Residues Gly8 and Arg11 each contribute to the ATP site. CTP is bound by residues Gly8 and Arg11. Mg(2+) contacts are provided by Glu21 and Asp23. ATP-binding residues include Arg91, Arg137, and Arg140. CTP-binding residues include Arg91, Arg137, and Arg140. The HD domain occupies 228 to 329 (TGIHTLMTLA…LKLFDAIDVW (102 aa)).

This sequence belongs to the tRNA nucleotidyltransferase/poly(A) polymerase family. Bacterial CCA-adding enzyme type 1 subfamily. In terms of assembly, monomer. Can also form homodimers and oligomers. It depends on Mg(2+) as a cofactor. Ni(2+) is required as a cofactor.

It catalyses the reaction a tRNA precursor + 2 CTP + ATP = a tRNA with a 3' CCA end + 3 diphosphate. The catalysed reaction is a tRNA with a 3' CCA end + 2 CTP + ATP = a tRNA with a 3' CCACCA end + 3 diphosphate. Functionally, catalyzes the addition and repair of the essential 3'-terminal CCA sequence in tRNAs without using a nucleic acid template. Adds these three nucleotides in the order of C, C, and A to the tRNA nucleotide-73, using CTP and ATP as substrates and producing inorganic pyrophosphate. tRNA 3'-terminal CCA addition is required both for tRNA processing and repair. Also involved in tRNA surveillance by mediating tandem CCA addition to generate a CCACCA at the 3' terminus of unstable tRNAs. While stable tRNAs receive only 3'-terminal CCA, unstable tRNAs are marked with CCACCA and rapidly degraded. The chain is Multifunctional CCA protein from Yersinia enterocolitica serotype O:8 / biotype 1B (strain NCTC 13174 / 8081).